Reading from the N-terminus, the 310-residue chain is Cytosolic Fe-S cluster assembly factor Nubp1 homolog (310 aa).

[4Fe-4S] cluster is bound by residues Cys-9, Cys-23, Cys-26, and Cys-32. 63 to 70 (GKGGVGKS) serves as a coordination point for ATP. [4Fe-4S] cluster is bound by residues Cys-240 and Cys-243.

Belongs to the Mrp/NBP35 ATP-binding proteins family. NUBP1/NBP35 subfamily. In terms of assembly, heterotetramer of 2 Nubp1 and 2 Nubp2 chains. The cofactor is [4Fe-4S] cluster.

Its subcellular location is the cytoplasm. Its function is as follows. Component of the cytosolic iron-sulfur (Fe/S) protein assembly (CIA) machinery. Required for maturation of extramitochondrial Fe-S proteins. The Nubp1-Nubp2 heterotetramer forms a Fe-S scaffold complex, mediating the de novo assembly of an Fe-S cluster and its transfer to target apoproteins. This chain is Cytosolic Fe-S cluster assembly factor Nubp1 homolog, found in Drosophila virilis (Fruit fly).